The following is a 43-amino-acid chain: Protein PsbN (43 aa).

Residues 7-27 (LSIAIGSILLVITGFAIYTAF) form a helical membrane-spanning segment.

Belongs to the PsbN family.

Its subcellular location is the cellular thylakoid membrane. Its function is as follows. May play a role in photosystem I and II biogenesis. The sequence is that of Protein PsbN from Crocosphaera subtropica (strain ATCC 51142 / BH68) (Cyanothece sp. (strain ATCC 51142)).